The sequence spans 294 residues: ATP phosphoribosyltransferase (294 aa).

This sequence belongs to the ATP phosphoribosyltransferase family. Long subfamily. Requires Mg(2+) as cofactor.

The protein resides in the cytoplasm. The enzyme catalyses 1-(5-phospho-beta-D-ribosyl)-ATP + diphosphate = 5-phospho-alpha-D-ribose 1-diphosphate + ATP. It participates in amino-acid biosynthesis; L-histidine biosynthesis; L-histidine from 5-phospho-alpha-D-ribose 1-diphosphate: step 1/9. Its activity is regulated as follows. Feedback inhibited by histidine. Its function is as follows. Catalyzes the condensation of ATP and 5-phosphoribose 1-diphosphate to form N'-(5'-phosphoribosyl)-ATP (PR-ATP). Has a crucial role in the pathway because the rate of histidine biosynthesis seems to be controlled primarily by regulation of HisG enzymatic activity. The chain is ATP phosphoribosyltransferase from Chlorobium chlorochromatii (strain CaD3).